Consider the following 145-residue polypeptide: 3-hydroxyacyl-[acyl-carrier-protein] dehydratase FabZ (145 aa).

Residue His-49 is part of the active site.

Belongs to the thioester dehydratase family. FabZ subfamily.

Its subcellular location is the cytoplasm. The enzyme catalyses a (3R)-hydroxyacyl-[ACP] = a (2E)-enoyl-[ACP] + H2O. Functionally, involved in unsaturated fatty acids biosynthesis. Catalyzes the dehydration of short chain beta-hydroxyacyl-ACPs and long chain saturated and unsaturated beta-hydroxyacyl-ACPs. The polypeptide is 3-hydroxyacyl-[acyl-carrier-protein] dehydratase FabZ (Rickettsia massiliae (strain Mtu5)).